A 304-amino-acid chain; its full sequence is tRNA uridine(34) hydroxylase (304 aa).

Residues 124–219 (QDEETLLIDT…YLETIPKEDS (96 aa)) form the Rhodanese domain. The Cysteine persulfide intermediate role is filled by C179.

This sequence belongs to the TrhO family.

The enzyme catalyses uridine(34) in tRNA + AH2 + O2 = 5-hydroxyuridine(34) in tRNA + A + H2O. Functionally, catalyzes oxygen-dependent 5-hydroxyuridine (ho5U) modification at position 34 in tRNAs. The protein is tRNA uridine(34) hydroxylase of Bartonella henselae (strain ATCC 49882 / DSM 28221 / CCUG 30454 / Houston 1) (Rochalimaea henselae).